Reading from the N-terminus, the 88-residue chain is Eclosion hormone (88 aa).

Positions methionine 1–cysteine 26 are cleaved as a signal peptide. 3 cysteine pairs are disulfide-bonded: cysteine 40–cysteine 64, cysteine 44–cysteine 60, and cysteine 47–cysteine 75.

The protein belongs to the insect eclosion hormone family.

It is found in the secreted. Functionally, neuropeptide that triggers the performance of ecdysis behaviors at the end of a molt. It triggers adult behavior patterns: larval, pupal and adult ecdysis, and plasticization during the molt. The polypeptide is Eclosion hormone (Manduca sexta (Tobacco hawkmoth)).